The sequence spans 426 residues: Protein trichome birefringence-like 19 (426 aa).

Residues 15-35 (LLIAVTIATSLLTIIPLLYPL) form a helical; Signal-anchor for type II membrane protein membrane-spanning segment. The GDS motif motif lies at 142 to 144 (GDS). Positions 388–402 (DCVHWCLPGPIDNLN) match the DCXHWCLPGXXDXWN motif motif.

This sequence belongs to the PC-esterase family. TBL subfamily.

Its subcellular location is the membrane. Functionally, may act as a bridging protein that binds pectin and other cell wall polysaccharides. Probably involved in maintaining esterification of pectins. May be involved in the specific O-acetylation of cell wall polymers. This is Protein trichome birefringence-like 19 (TBL19) from Arabidopsis thaliana (Mouse-ear cress).